Here is a 252-residue protein sequence, read N- to C-terminus: MLQKRIIPCLDVTEGRVVKGTNFINLRDAGDPVELAAFYDREGADELVFLDITASAEGRKTTVEMVYRTAGEVFIPFTVGGGISTLEDIRFILSAGADKVSINTAAVKDPQLVTEAANRFGSQCIVVAIDARQRGPESWEVYIHGGRTPTGIDAVEWAKKAEFLGAGEILLTSMDRDGTKDGYDLALTRAVARAVNIPVIASGGAGSLEHLYEGLTEGEADAVLAASIFHFGEYSIREAKEYLRSRGVPVRI.

Active-site residues include Asp11 and Asp130.

The protein belongs to the HisA/HisF family. Heterodimer of HisH and HisF.

It localises to the cytoplasm. The catalysed reaction is 5-[(5-phospho-1-deoxy-D-ribulos-1-ylimino)methylamino]-1-(5-phospho-beta-D-ribosyl)imidazole-4-carboxamide + L-glutamine = D-erythro-1-(imidazol-4-yl)glycerol 3-phosphate + 5-amino-1-(5-phospho-beta-D-ribosyl)imidazole-4-carboxamide + L-glutamate + H(+). It functions in the pathway amino-acid biosynthesis; L-histidine biosynthesis; L-histidine from 5-phospho-alpha-D-ribose 1-diphosphate: step 5/9. Its function is as follows. IGPS catalyzes the conversion of PRFAR and glutamine to IGP, AICAR and glutamate. The HisF subunit catalyzes the cyclization activity that produces IGP and AICAR from PRFAR using the ammonia provided by the HisH subunit. The sequence is that of Imidazole glycerol phosphate synthase subunit HisF from Pelotomaculum thermopropionicum (strain DSM 13744 / JCM 10971 / SI).